The sequence spans 602 residues: Cholinesterase (602 aa).

A signal peptide spans 1-28 (MHSKVTIICIRFLFWFLLLCMLIGKSHT). N-linked (GlcNAc...) (complex) asparagine glycans are attached at residues N45 and N85. C93 and C120 are oxidised to a cystine. A tacrine-binding site is contributed by W110. N-linked (GlcNAc...) (complex) asparagine glycosylation occurs at N134. 144–145 (GG) is a substrate binding site. S226 serves as the catalytic Acyl-ester intermediate. S226 carries the phosphoserine modification. N-linked (GlcNAc...) (complex) asparagine glycosylation is found at N269 and N284. C280 and C291 are disulfide-bonded. Catalysis depends on E353, which acts as the Charge relay system. N369 carries an N-linked (GlcNAc...) (complex) asparagine glycan. Residues C428 and C547 are joined by a disulfide bond. H466 contacts tacrine. H466 (charge relay system) is an active-site residue. A glycan (N-linked (GlcNAc...) (complex) asparagine) is linked at N483. 3 N-linked (GlcNAc...) asparagine glycosylation sites follow: N509, N513, and N514.

The protein belongs to the type-B carboxylesterase/lipase family. In terms of assembly, homotetramer; disulfide-linked. Dimer of dimers. N-glycosylated. No other PTM detected. The major N-glycan structures are of the complex diantennary type with 1 and 2 N-acetylneuraminic acid molecules (Neu5Ac) making up approximately 33% and 47% of the total N-glycans, respectively. Only low amounts of fucosylated diantennary N-glycans are detected (approximately 2%). Triantennary N-glycans with or without fucose amount to approximately 13%, whereas 5% of the total N-glycans are of the oligomannosidic or hybrid type. In terms of tissue distribution, detected in blood plasma (at protein level). Present in most cells except erythrocytes.

Its subcellular location is the secreted. It catalyses the reaction an acylcholine + H2O = a carboxylate + choline + H(+). With respect to regulation, inhibited by mercury. Inhibited by Tabun. Tabun forms a covalent adduct with Ser-226 that becomes irreversible upon aging. Functionally, esterase with broad substrate specificity. Contributes to the inactivation of the neurotransmitter acetylcholine. Can degrade neurotoxic organophosphate esters. The sequence is that of Cholinesterase (BCHE) from Homo sapiens (Human).